A 586-amino-acid chain; its full sequence is Assimilatory ferredoxin-dependent nitrite reductase (586 aa).

[4Fe-4S] cluster contacts are provided by Cys411, Cys417, Cys455, and Cys459. A siroheme-binding site is contributed by Cys459. Residues 566 to 586 (SWYPFADEDEPPKTEQPMTSD) are disordered.

Belongs to the nitrite and sulfite reductase 4Fe-4S domain family. In terms of assembly, monomer. Requires siroheme as cofactor. [4Fe-4S] cluster serves as cofactor.

It carries out the reaction 6 oxidized [2Fe-2S]-[ferredoxin] + NH4(+) + 2 H2O = nitrite + 6 reduced [2Fe-2S]-[ferredoxin] + 8 H(+). The protein operates within nitrogen metabolism; nitrate reduction (assimilation). Its activity is regulated as follows. Inhibited by cyanide and azide. Catalyzes the reduction of nitrite to ammonium in the nitrate assimilation pathway, using ferredoxin as the electron donor. Can use reduced methyl viologen but neither NADPH nor NADH as electron donors. This is Assimilatory ferredoxin-dependent nitrite reductase from Haloferax mediterranei (strain ATCC 33500 / DSM 1411 / JCM 8866 / NBRC 14739 / NCIMB 2177 / R-4) (Halobacterium mediterranei).